We begin with the raw amino-acid sequence, 366 residues long: Chorismate synthase (366 aa).

R48 is a binding site for NADP(+). FMN contacts are provided by residues 131-133 (RAS), 243-244 (NA), G288, 303-307 (KPTSS), and R329.

It belongs to the chorismate synthase family. Homotetramer. It depends on FMNH2 as a cofactor.

The catalysed reaction is 5-O-(1-carboxyvinyl)-3-phosphoshikimate = chorismate + phosphate. It functions in the pathway metabolic intermediate biosynthesis; chorismate biosynthesis; chorismate from D-erythrose 4-phosphate and phosphoenolpyruvate: step 7/7. In terms of biological role, catalyzes the anti-1,4-elimination of the C-3 phosphate and the C-6 proR hydrogen from 5-enolpyruvylshikimate-3-phosphate (EPSP) to yield chorismate, which is the branch point compound that serves as the starting substrate for the three terminal pathways of aromatic amino acid biosynthesis. This reaction introduces a second double bond into the aromatic ring system. This chain is Chorismate synthase, found in Bartonella henselae (strain ATCC 49882 / DSM 28221 / CCUG 30454 / Houston 1) (Rochalimaea henselae).